The chain runs to 1426 residues: Homeobox protein cut-like 2 (1426 aa).

The tract at residues 77–104 (PEPPSAREQNEGTCPTGHTPANGNHLPG) is disordered. A Phosphoserine modification is found at Ser-81. Positions 131–311 (ITLAARLGEA…IKTELSILRA (181 aa)) form a coiled coil. Disordered stretches follow at residues 351–419 (ALLA…FPSL), 460–488 (KPPS…GPEE), 599–628 (EIES…STSE), 653–676 (ESGP…TASQ), 743–769 (YASV…PRGD), and 904–977 (LGQG…SSSQ). A compositionally biased stretch (pro residues) spans 374-395 (PPYPPQLPPPPGPEDPLSPSPA). 2 stretches are compositionally biased toward low complexity: residues 397–408 (PLLGPSLGPDGP) and 460–470 (KPPSAPAASVP). The CUT 1 DNA-binding region spans 482 to 569 (DGAGPEEEQL…VLALRTIQVR (88 aa)). The stretch at 587–655 (DAIKSILEQA…QQALLEMESG (69 aa)) forms a coiled coil. Positions 608–628 (SKNSPASVSIPNGTASSSTSE) are enriched in polar residues. Composition is skewed to low complexity over residues 743–757 (YASV…SSYS), 910–928 (QAPT…EPTS), and 965–976 (SSSLGGKPFSSS). Positions 828–915 (QYELYMYREV…QGQGQAPTQQ (88 aa)) form a DNA-binding region, CUT 2. The CUT 3 DNA-binding region spans 983–1070 (QEMVAMSPEL…VEKLRDMKKL (88 aa)). Positions 1113-1172 (AKKPRVVLAPAEKEALRKAYQLEPYPSQQTIELLSFQLNLKTNTVINWFHNYRSRMRREM) form a DNA-binding region, homeobox. The disordered stretch occupies residues 1177 to 1392 (TQDDPDFDPS…AALHPSTKVN (216 aa)). Composition is skewed to basic and acidic residues over residues 1233 to 1245 (APDR…KQEE) and 1260 to 1274 (DPDR…EHTH). Positions 1318-1332 (LSFKSTSESSCCSLE) are enriched in low complexity. Over residues 1338-1350 (PSVISSPDLTTCV) the composition is skewed to polar residues. Over residues 1351–1364 (SPAPSSSAPISPSL) the composition is skewed to low complexity.

It belongs to the CUT homeobox family. In terms of tissue distribution, restricted to neural tissues. Expressed exclusively in the central and peripheral nervous systems.

The protein localises to the nucleus. Functionally, transcription factor involved in the control of neuronal proliferation and differentiation in the brain. Regulates dendrite development and branching, dendritic spine formation, and synaptogenesis in cortical layers II-III. Binds to DNA in a sequence-specific manner. In Mus musculus (Mouse), this protein is Homeobox protein cut-like 2 (Cux2).